The chain runs to 316 residues: DNA-directed RNA polymerase III subunit RPC6 (316 aa).

Residue A2 is modified to N-acetylalanine. Residues K5 and K7 each participate in a glycyl lysine isopeptide (Lys-Gly) (interchain with G-Cter in SUMO2) cross-link. Residues C287, C290, C296, and C307 each contribute to the [4Fe-4S] cluster site.

Belongs to the eukaryotic RPC34/RPC39 RNA polymerase subunit family. Component of the RNA polymerase III complex consisting of 17 subunits: a ten-subunit horseshoe-shaped catalytic core composed of POLR3A/RPC1, POLR3B/RPC2, POLR1C/RPAC1, POLR1D/RPAC2, POLR3K/RPC10, POLR2E/RPABC1, POLR2F/RPABC2, POLR2H/RPABC3, POLR2K/RPABC4 and POLR2L/RPABC5; a mobile stalk composed of two subunits POLR3H/RPC8 and CRCP/RPC9, protruding from the core and functioning primarily in transcription initiation; and additional subunits homologous to general transcription factors of the RNA polymerase II machinery, POLR3C/RPC3-POLR3F/RPC6-POLR3G/RPC7 heterotrimer required for transcription initiation and POLR3D/RPC4-POLR3E/RPC5 heterodimer involved in both transcription initiation and termination. Directly interacts with POLR3C. Interacts with TBP and TFIIIB90 and GTF3C4. Interacts with MAF1. As part of the RNA polymerase III complex, interacts with PKP2.

The protein localises to the nucleus. In terms of biological role, DNA-dependent RNA polymerase catalyzes the transcription of DNA into RNA using the four ribonucleoside triphosphates as substrates. Specific peripheric component of RNA polymerase III (Pol III) which synthesizes small non-coding RNAs including 5S rRNA, snRNAs, tRNAs and miRNAs from at least 500 distinct genomic loci. Part of POLR3C/RPC3-POLR3F/RPC6-POLR3G/RPC7 heterotrimer that coordinates the dynamics of Pol III stalk and clamp modules during the transition from apo to elongation state. Pol III plays a key role in sensing and limiting infection by intracellular bacteria and DNA viruses, including varicella zoster virus. Acts as a nuclear and cytosolic DNA sensor detecting AT-rich DNA, involved in innate immune response. Can sense non-self dsDNA that serves as template for transcription into dsRNA. The non-self RNA polymerase III transcripts, such as Epstein-Barr virus-encoded RNAs (EBERs) induce type I interferon and NF-kappa-B through the RIG-I pathway. Preferentially binds double-stranded DNA (dsDNA). In Bos taurus (Bovine), this protein is DNA-directed RNA polymerase III subunit RPC6 (POLR3F).